Reading from the N-terminus, the 364-residue chain is 3-isopropylmalate dehydrogenase (364 aa).

Position 79 to 90 (Gly79 to Glu90) interacts with NAD(+). Residues Arg97, Arg107, Arg136, and Asp225 each contribute to the substrate site. 3 residues coordinate Mg(2+): Asp225, Asp250, and Asp254. Gly289 to Asn300 is an NAD(+) binding site.

This sequence belongs to the isocitrate and isopropylmalate dehydrogenases family. In terms of assembly, homodimer. Requires Mg(2+) as cofactor. It depends on Mn(2+) as a cofactor.

The protein resides in the cytoplasm. The catalysed reaction is (2R,3S)-3-isopropylmalate + NAD(+) = 4-methyl-2-oxopentanoate + CO2 + NADH. It participates in amino-acid biosynthesis; L-leucine biosynthesis; L-leucine from 3-methyl-2-oxobutanoate: step 3/4. Catalyzes the oxidation of 3-carboxy-2-hydroxy-4-methylpentanoate (3-isopropylmalate) to 3-carboxy-4-methyl-2-oxopentanoate. The product decarboxylates to 4-methyl-2 oxopentanoate. The chain is 3-isopropylmalate dehydrogenase (LEU2) from Saccharomyces cerevisiae (strain ATCC 204508 / S288c) (Baker's yeast).